Here is a 565-residue protein sequence, read N- to C-terminus: Probable beta-glucosidase btgE (565 aa).

Residues 1–18 (MRGAILATAAALAGTAMA) form the signal peptide. The tract at residues 246 to 304 (TGQDEPTSAPAAPSTTAVPATTTAAPETTTAAPDTTTAVPSTSSAAPSSSSTAPASTGA) is disordered. A compositionally biased stretch (low complexity) spans 251–304 (PTSAPAAPSTTAVPATTTAAPETTTAAPDTTTAVPSTSSAAPSSSSTAPASTGA). The Proton donor role is filled by Glu405. Catalysis depends on Glu501, which acts as the Nucleophile.

Belongs to the glycosyl hydrolase 17 family.

The protein localises to the secreted. Its subcellular location is the cell wall. It carries out the reaction Hydrolysis of terminal, non-reducing beta-D-glucosyl residues with release of beta-D-glucose.. It functions in the pathway glycan metabolism; cellulose degradation. Functionally, beta-glucosidases are one of a number of cellulolytic enzymes involved in the degradation of cellulosic biomass. Catalyzes the last step releasing glucose from the inhibitory cellobiose. The sequence is that of Probable beta-glucosidase btgE (btgE) from Aspergillus fumigatus (strain CBS 144.89 / FGSC A1163 / CEA10) (Neosartorya fumigata).